Consider the following 500-residue polypeptide: L-arabinose isomerase (500 aa).

Residues E306, E333, H350, and H450 each coordinate Mn(2+).

This sequence belongs to the arabinose isomerase family. In terms of assembly, homohexamer. Mn(2+) serves as cofactor.

It carries out the reaction beta-L-arabinopyranose = L-ribulose. It functions in the pathway carbohydrate degradation; L-arabinose degradation via L-ribulose; D-xylulose 5-phosphate from L-arabinose (bacterial route): step 1/3. In terms of biological role, catalyzes the conversion of L-arabinose to L-ribulose. This chain is L-arabinose isomerase, found in Shigella boydii serotype 18 (strain CDC 3083-94 / BS512).